The following is a 653-amino-acid chain: Multidomain regulatory protein Rv1364c (653 aa).

Phosphothreonine; by PknD is present on residues Thr-54 and Thr-81. Residues 86–142 enclose the PAC domain; that stretch reads SGSEWRLQTDYDGSGVEERYFDFVVTPRRRADGSIEGVQLIVDDVTSRVRARQAAEA. Residues 177 to 396 form the PPM-type phosphatase domain; sequence DIAAEYLVAA…DDVTLLAMQR (220 aa). Mn(2+)-binding residues include Asp-211 and Val-212. Thr-299 carries the post-translational modification Phosphothreonine; by PknD. Mn(2+) is bound by residues Asp-328 and Asp-387. Thr-390 bears the Phosphothreonine; by PknD mark. Positions 397–544 are anti-sigma factor kinase region; that stretch reads RAPTPPLHIT…TMVRRAAFQQ (148 aa). Ser-506 is subject to Phosphoserine; by PknD. Thr-520 and Thr-568 each carry phosphothreonine; by PknD. The 108-residue stretch at 546–653 folds into the STAS domain; that stretch reads IDSEFVSLVE…ADTEDIFAQE (108 aa). At Ser-600 the chain carries Phosphoserine; by autocatalysis.

As to quaternary structure, exists in solution as both monomer and dimer. Both the phosphorylated and unphosphorylated proteins form extended dimers. Interacts with SigF. Can efficiently bind to SigF independently of its autophosphorylation. Interaction between SigF and Rv1364c is reduced significantly upon the phosphorylation of both proteins by PknD. Mn(2+) serves as cofactor. Mg(2+) is required as a cofactor. Post-translationally, autophosphorylated. Phosphorylated by PknD on multiple threonine and serine residues. Phosphorylation is antagonized by the phosphatase activity.

The enzyme catalyses O-phospho-L-seryl-[protein] + H2O = L-seryl-[protein] + phosphate. It carries out the reaction O-phospho-L-threonyl-[protein] + H2O = L-threonyl-[protein] + phosphate. The catalysed reaction is L-seryl-[protein] + ATP = O-phospho-L-seryl-[protein] + ADP + H(+). It catalyses the reaction L-threonyl-[protein] + ATP = O-phospho-L-threonyl-[protein] + ADP + H(+). The phosphatase domain is activated by the anti-sigma factor kinase domain. Its function is as follows. Primarily acts as an independent SigF regulator that is sensitive to the osmosensory signal, mediating the cross talk of PknD with the SigF regulon. Possesses both phosphatase and kinase activities. The kinase domain functions as a classic anti-sigma factor-like kinase to phosphorylate the anti-anti-sigma factor domain at the canonical regulatory site, and the phosphatase domain antagonizes this activity. The sequence is that of Multidomain regulatory protein Rv1364c from Mycobacterium tuberculosis (strain ATCC 25618 / H37Rv).